The sequence spans 195 residues: Transmembrane protein 239 (195 aa).

2 consecutive transmembrane segments (helical) span residues 105–125 and 145–171; these read LWGLEGILYLLLALMLCHALF and HLLPALLLLVLSALPALLFTASFLLLF.

The protein localises to the membrane. The protein is Transmembrane protein 239 (TMEM239) of Homo sapiens (Human).